We begin with the raw amino-acid sequence, 296 residues long: Acetylglutamate kinase (296 aa).

Substrate contacts are provided by residues 67 to 68, arginine 89, and asparagine 194; that span reads GG.

The protein belongs to the acetylglutamate kinase family. ArgB subfamily.

The protein resides in the cytoplasm. The catalysed reaction is N-acetyl-L-glutamate + ATP = N-acetyl-L-glutamyl 5-phosphate + ADP. The protein operates within amino-acid biosynthesis; L-arginine biosynthesis; N(2)-acetyl-L-ornithine from L-glutamate: step 2/4. In terms of biological role, catalyzes the ATP-dependent phosphorylation of N-acetyl-L-glutamate. This chain is Acetylglutamate kinase, found in Brucella canis (strain ATCC 23365 / NCTC 10854 / RM-666).